The primary structure comprises 613 residues: Secretogranin-2 (613 aa).

The N-terminal stretch at 1–27 is a signal peptide; that stretch reads MAEAKTHWLGAVLSLIPLIFLLSEAEA. Residues 28 to 30 constitute a propeptide that is removed on maturation; the sequence is ASF. Disordered stretches follow at residues 67 to 105 and 119 to 146; these read QQAHKEESSPDYNPYQGVSVPLQQKENGDLPESSRDSLS and QAENEPQSAPKENKPYTLNSEKNFPMDM. The span at 92–105 shows a compositional bias: basic and acidic residues; it reads ENGDLPESSRDSLS. Residue Tyr-150 is modified to Sulfotyrosine. Phosphoserine occurs at positions 173, 267, 428, 528, 551, and 552. Positions 257–283 are enriched in basic and acidic residues; it reads ESQTQEEVRDSKENADKTEQINDEMKR. The tract at residues 257 to 287 is disordered; it reads ESQTQEEVRDSKENADKTEQINDEMKRSGQL. Residues 546 to 557 show a composition bias toward basic and acidic residues; the sequence is HLSQHSSQETDK. The tract at residues 546–580 is disordered; that stretch reads HLSQHSSQETDKLASVSKRLPVGTPKSDDTPNRPY.

This sequence belongs to the chromogranin/secretogranin protein family. In terms of assembly, interacts with Secretogranin III/SCG3. Highest levels detected in anterior pituitary followed by adrenal medulla and posterior pituitary (at protein level). In the brain, high levels are found in the hypothalamus, comparable to those present in posterior pituitary with two- to six-fold lower levels present in the other brain regions investigated including caudate nucleus, hippocampus, thalamus and brainstem (at protein level).

Its subcellular location is the secreted. In terms of biological role, neuroendocrine protein of the granin family that regulates the biogenesis of secretory granules. In Bos taurus (Bovine), this protein is Secretogranin-2 (SCG2).